A 360-amino-acid chain; its full sequence is Peptide chain release factor 1 (360 aa).

Gln235 carries the N5-methylglutamine modification. Positions 284–293 are enriched in basic and acidic residues; it reads QKRQQEEAST. The segment at 284 to 305 is disordered; it reads QKRQQEEASTRRNLLGSGDRSD.

This sequence belongs to the prokaryotic/mitochondrial release factor family. Methylated by PrmC. Methylation increases the termination efficiency of RF1.

The protein localises to the cytoplasm. Peptide chain release factor 1 directs the termination of translation in response to the peptide chain termination codons UAG and UAA. This chain is Peptide chain release factor 1, found in Pectobacterium carotovorum subsp. carotovorum (strain PC1).